The following is a 482-amino-acid chain: Cilia- and flagella-associated protein 53 (482 aa).

Coiled coils occupy residues Asp-9–Glu-40, Ala-67–Ala-124, and Ile-152–Ala-413. The segment at Val-462–Trp-482 is disordered.

Belongs to the CFAP53 family.

The protein localises to the cell projection. It localises to the cilium. Its subcellular location is the flagellum. In terms of biological role, may play a role in filopodium movement. The protein is Cilia- and flagella-associated protein 53 of Chlamydomonas reinhardtii (Chlamydomonas smithii).